The chain runs to 428 residues: Peptidase B (428 aa).

Lys195 and Asp200 together coordinate Mn(2+). The active site involves Lys207. 3 residues coordinate Mn(2+): Asp218, Asp277, and Glu279. The active site involves Arg281.

The protein belongs to the peptidase M17 family. As to quaternary structure, homohexamer. Mn(2+) serves as cofactor.

It is found in the cytoplasm. The catalysed reaction is Release of an N-terminal amino acid, Xaa, from a peptide or arylamide. Xaa is preferably Glu or Asp but may be other amino acids, including Leu, Met, His, Cys and Gln.. Functionally, probably plays an important role in intracellular peptide degradation. In Cronobacter sakazakii (strain ATCC BAA-894) (Enterobacter sakazakii), this protein is Peptidase B.